The primary structure comprises 95 residues: Aspartyl/glutamyl-tRNA(Asn/Gln) amidotransferase subunit C (95 aa).

Belongs to the GatC family. In terms of assembly, heterotrimer of A, B and C subunits.

It catalyses the reaction L-glutamyl-tRNA(Gln) + L-glutamine + ATP + H2O = L-glutaminyl-tRNA(Gln) + L-glutamate + ADP + phosphate + H(+). It carries out the reaction L-aspartyl-tRNA(Asn) + L-glutamine + ATP + H2O = L-asparaginyl-tRNA(Asn) + L-glutamate + ADP + phosphate + 2 H(+). Allows the formation of correctly charged Asn-tRNA(Asn) or Gln-tRNA(Gln) through the transamidation of misacylated Asp-tRNA(Asn) or Glu-tRNA(Gln) in organisms which lack either or both of asparaginyl-tRNA or glutaminyl-tRNA synthetases. The reaction takes place in the presence of glutamine and ATP through an activated phospho-Asp-tRNA(Asn) or phospho-Glu-tRNA(Gln). The sequence is that of Aspartyl/glutamyl-tRNA(Asn/Gln) amidotransferase subunit C from Vesicomyosocius okutanii subsp. Calyptogena okutanii (strain HA).